A 163-amino-acid polypeptide reads, in one-letter code: Glutathione peroxidase 2 (163 aa).

Residue C36 is part of the active site.

The protein belongs to the glutathione peroxidase family.

The protein resides in the cytoplasm. It carries out the reaction 2 glutathione + H2O2 = glutathione disulfide + 2 H2O. May constitute a glutathione peroxidase-like protective system against oxidative stresses. The protein is Glutathione peroxidase 2 (gpx-2) of Caenorhabditis elegans.